Reading from the N-terminus, the 230-residue chain is Fibronectin type III domain-containing protein 4 (230 aa).

A signal peptide spans 1–40; sequence MPGCLPADSVGTMASLMPLSPYLSPTVLLLVSCDLGFVRA. Residues 41–163 are Extracellular-facing; sequence DRPPSPVNVT…GLDGERPLQT (123 aa). Positions 43–136 constitute a Fibronectin type-III domain; that stretch reads PPSPVNVTVT…PRVHFRTLKG (94 aa). N-linked (GlcNAc...) asparagine glycans are attached at residues Asn-48 and Asn-143. A disordered region spans residues 118-156; the sequence is GLRGESPPGPRVHFRTLKGSDRLPSNSSSPGDITVEGLD. A helical transmembrane segment spans residues 164–184; that stretch reads GEVVIIVVVLLMWAAVIGLFC. Residues 185–230 lie on the Cytoplasmic side of the membrane; the sequence is RQYDIIKDNDSNNNPKEKGKGPEQSPQGRPVGTRQKKSPSINTIDV. Residues 193 to 205 show a composition bias toward basic and acidic residues; that stretch reads NDSNNNPKEKGKG. The interval 193–230 is disordered; that stretch reads NDSNNNPKEKGKGPEQSPQGRPVGTRQKKSPSINTIDV.

It is found in the membrane. Its subcellular location is the secreted. Its function is as follows. Has anti-inflammatory properties. In the colon, acts on macrophages to down-regulate inflammation. May suppress osteoclastogenesis and mature osteoclast resorptive function. In white adipose tissue, decreases local inflammation, via interaction with GPR116. Also required for proper systemic glucose tolerance, specifically sensitizing white adipocytes to insulin and promoting glucose uptake. The insulin sensitizing function in adipose tissue is mediated by interaction with ADGRF5/GPR116 and activation of cAMP signaling. The polypeptide is Fibronectin type III domain-containing protein 4 (FNDC4) (Bos taurus (Bovine)).